The following is a 635-amino-acid chain: Threonine--tRNA ligase (635 aa).

The region spanning 1 to 61 (MVSIRLPDGS…DRDASLAIVT (61 aa)) is the TGS domain. Residues 242–533 (DHRKLGKQLD…LIEHHAGAMP (292 aa)) are catalytic. Positions 333, 384, and 510 each coordinate Zn(2+).

The protein belongs to the class-II aminoacyl-tRNA synthetase family. As to quaternary structure, homodimer. Requires Zn(2+) as cofactor.

Its subcellular location is the cytoplasm. It catalyses the reaction tRNA(Thr) + L-threonine + ATP = L-threonyl-tRNA(Thr) + AMP + diphosphate + H(+). In terms of biological role, catalyzes the attachment of threonine to tRNA(Thr) in a two-step reaction: L-threonine is first activated by ATP to form Thr-AMP and then transferred to the acceptor end of tRNA(Thr). Also edits incorrectly charged L-seryl-tRNA(Thr). The sequence is that of Threonine--tRNA ligase from Burkholderia pseudomallei (strain 1106a).